Reading from the N-terminus, the 293-residue chain is Phosphatidylglycerol--prolipoprotein diacylglyceryl transferase (293 aa).

4 consecutive transmembrane segments (helical) span residues 45 to 65, 81 to 101, 115 to 135, and 144 to 164; these read FELR…YFVA, ELIF…YVLF, IWEG…TGFL, and FTFL…QAIG. Residue arginine 165 participates in a 1,2-diacyl-sn-glycero-3-phospho-(1'-sn-glycerol) binding. 3 helical membrane-spanning segments follow: residues 204-224, 231-249, and 262-282; these read PTFL…SVYF, HGEV…RIVI, and IKAA…GFLI.

This sequence belongs to the Lgt family.

It is found in the cell inner membrane. The enzyme catalyses L-cysteinyl-[prolipoprotein] + a 1,2-diacyl-sn-glycero-3-phospho-(1'-sn-glycerol) = an S-1,2-diacyl-sn-glyceryl-L-cysteinyl-[prolipoprotein] + sn-glycerol 1-phosphate + H(+). Its pathway is protein modification; lipoprotein biosynthesis (diacylglyceryl transfer). Its function is as follows. Catalyzes the transfer of the diacylglyceryl group from phosphatidylglycerol to the sulfhydryl group of the N-terminal cysteine of a prolipoprotein, the first step in the formation of mature lipoproteins. This is Phosphatidylglycerol--prolipoprotein diacylglyceryl transferase from Thermotoga maritima (strain ATCC 43589 / DSM 3109 / JCM 10099 / NBRC 100826 / MSB8).